The following is a 156-amino-acid chain: Small ribosomal subunit protein uS7 (156 aa).

The protein belongs to the universal ribosomal protein uS7 family. In terms of assembly, part of the 30S ribosomal subunit. Contacts proteins S9 and S11.

Functionally, one of the primary rRNA binding proteins, it binds directly to 16S rRNA where it nucleates assembly of the head domain of the 30S subunit. Is located at the subunit interface close to the decoding center, probably blocks exit of the E-site tRNA. In Sphingopyxis alaskensis (strain DSM 13593 / LMG 18877 / RB2256) (Sphingomonas alaskensis), this protein is Small ribosomal subunit protein uS7.